Consider the following 1665-residue polypeptide: Mediator of RNA polymerase II transcription subunit 13 (1665 aa).

4 disordered regions span residues 411-460 (KETE…IDKN), 482-512 (INLD…ETKP), 551-580 (TVSQ…GTET), and 673-781 (LDSS…NQIS). Acidic residues predominate over residues 415-445 (PENESENDMEIDDLFGGDESDDNDDLEEAGN). Residues 499-512 (VPDKENFKPKETKP) show a composition bias toward basic and acidic residues. Positions 551–568 (TVSQSAVTTNPPSVGSAP) are enriched in low complexity. Over residues 682–720 (EGGEDIEDDDNDYEDEGDDDEEEEGEEEEEEESDEDEIS) the composition is skewed to acidic residues. Positions 728 to 762 (LKLNTQNESVPPQQSNYNPVNITDSGSNTTNNITD) are enriched in polar residues.

This sequence belongs to the Mediator complex subunit 13 family. In terms of assembly, component of the SRB8-11 complex, which itself associates with the Mediator complex.

It localises to the nucleus. In terms of biological role, component of the SRB8-11 complex. The SRB8-11 complex is a regulatory module of the Mediator complex which is itself involved in regulation of basal and activated RNA polymerase II-dependent transcription. The SRB8-11 complex may be involved in the transcriptional repression of a subset of genes regulated by Mediator. It may inhibit the association of the Mediator complex with RNA polymerase II to form the holoenzyme complex. The protein is Mediator of RNA polymerase II transcription subunit 13 (SSN2) of Candida albicans (strain SC5314 / ATCC MYA-2876) (Yeast).